Reading from the N-terminus, the 344-residue chain is tRNA N6-adenosine threonylcarbamoyltransferase (344 aa).

Fe cation-binding residues include His-118 and His-122. Residues 141 to 145, Asp-174, Gly-187, and Asn-284 each bind substrate; that span reads TASGG. Asp-312 is a binding site for Fe cation.

Belongs to the KAE1 / TsaD family. The cofactor is Fe(2+).

Its subcellular location is the cytoplasm. The catalysed reaction is L-threonylcarbamoyladenylate + adenosine(37) in tRNA = N(6)-L-threonylcarbamoyladenosine(37) in tRNA + AMP + H(+). Required for the formation of a threonylcarbamoyl group on adenosine at position 37 (t(6)A37) in tRNAs that read codons beginning with adenine. Is involved in the transfer of the threonylcarbamoyl moiety of threonylcarbamoyl-AMP (TC-AMP) to the N6 group of A37, together with TsaE and TsaB. TsaD likely plays a direct catalytic role in this reaction. The polypeptide is tRNA N6-adenosine threonylcarbamoyltransferase (Desulfotalea psychrophila (strain LSv54 / DSM 12343)).